A 326-amino-acid chain; its full sequence is 4-hydroxythreonine-4-phosphate dehydrogenase (326 aa).

Residues His133 and Thr134 each contribute to the substrate site. 3 residues coordinate a divalent metal cation: His163, His208, and His263. Positions 271, 280, and 289 each coordinate substrate.

The protein belongs to the PdxA family. In terms of assembly, homodimer. Requires Zn(2+) as cofactor. Mg(2+) is required as a cofactor. It depends on Co(2+) as a cofactor.

It is found in the cytoplasm. The enzyme catalyses 4-(phosphooxy)-L-threonine + NAD(+) = 3-amino-2-oxopropyl phosphate + CO2 + NADH. It participates in cofactor biosynthesis; pyridoxine 5'-phosphate biosynthesis; pyridoxine 5'-phosphate from D-erythrose 4-phosphate: step 4/5. Its function is as follows. Catalyzes the NAD(P)-dependent oxidation of 4-(phosphooxy)-L-threonine (HTP) into 2-amino-3-oxo-4-(phosphooxy)butyric acid which spontaneously decarboxylates to form 3-amino-2-oxopropyl phosphate (AHAP). The chain is 4-hydroxythreonine-4-phosphate dehydrogenase from Pseudoalteromonas atlantica (strain T6c / ATCC BAA-1087).